Consider the following 194-residue polypeptide: Ras-related protein Rab-22A (194 aa).

12–20 is a GTP binding site; that stretch reads GDTGVGKSS. An Effector region motif is present at residues 34 to 42; sequence INPTIGASF. GTP is bound by residues 60 to 64, 118 to 121, and 148 to 150; these read DTAGQ, NKCD, and SAK. The disordered stretch occupies residues 170–194; that stretch reads DANPASGGKGFKLRRQPSEPKRSCC. Over residues 185-194 the composition is skewed to basic and acidic residues; the sequence is QPSEPKRSCC. Residues Cys193 and Cys194 are each lipidated (S-geranylgeranyl cysteine).

It belongs to the small GTPase superfamily. Rab family. Binds EEA1. Interacts (in its GTP-bound form) with RINL. Interacts directly with ZFYVE20. Interacts (in its GTP-bound form) with RABGEF1. Detected in brain and heart, and at lower levels in lung and spleen.

Its subcellular location is the endosome membrane. It is found in the cell membrane. It localises to the early endosome. The protein localises to the late endosome. The protein resides in the cell projection. Its subcellular location is the ruffle. It is found in the cytoplasmic vesicle. It localises to the phagosome. The protein localises to the phagosome membrane. In terms of biological role, plays a role in endocytosis and intracellular protein transport. Mediates trafficking of TF from early endosomes to recycling endosomes. Required for NGF-mediated endocytosis of NTRK1, and subsequent neurite outgrowth. Binds GTP and GDP and has low GTPase activity. Alternates between a GTP-bound active form and a GDP-bound inactive form. The chain is Ras-related protein Rab-22A (Rab22a) from Mus musculus (Mouse).